The following is a 123-amino-acid chain: Large ribosomal subunit protein uL22 (123 aa).

This sequence belongs to the universal ribosomal protein uL22 family. In terms of assembly, part of the 50S ribosomal subunit.

Functionally, this protein binds specifically to 23S rRNA; its binding is stimulated by other ribosomal proteins, e.g. L4, L17, and L20. It is important during the early stages of 50S assembly. It makes multiple contacts with different domains of the 23S rRNA in the assembled 50S subunit and ribosome. Its function is as follows. The globular domain of the protein is located near the polypeptide exit tunnel on the outside of the subunit, while an extended beta-hairpin is found that lines the wall of the exit tunnel in the center of the 70S ribosome. In Synechococcus sp. (strain JA-3-3Ab) (Cyanobacteria bacterium Yellowstone A-Prime), this protein is Large ribosomal subunit protein uL22.